The chain runs to 384 residues: NADP-dependent alcohol dehydrogenase 3 (384 aa).

The protein belongs to the iron-containing alcohol dehydrogenase family.

It carries out the reaction a primary alcohol + NADP(+) = an aldehyde + NADPH + H(+). Its function is as follows. Has NADP-dependent alcohol dehydrogenase activity. This Entamoeba histolytica (strain ATCC 30459 / HM-1:IMSS / ABRM) protein is NADP-dependent alcohol dehydrogenase 3.